We begin with the raw amino-acid sequence, 461 residues long: Cysteine--tRNA ligase (461 aa).

Cys-28 contributes to the Zn(2+) binding site. The short motif at 30-40 (ITVYDLCHIGH) is the 'HIGH' region element. Zn(2+) contacts are provided by Cys-209, His-234, and Glu-238. The 'KMSKS' region signature appears at 266-270 (KMSKS). Lys-269 lines the ATP pocket.

It belongs to the class-I aminoacyl-tRNA synthetase family. Monomer. Zn(2+) is required as a cofactor.

The protein resides in the cytoplasm. It carries out the reaction tRNA(Cys) + L-cysteine + ATP = L-cysteinyl-tRNA(Cys) + AMP + diphosphate. In Escherichia coli O6:K15:H31 (strain 536 / UPEC), this protein is Cysteine--tRNA ligase.